A 962-amino-acid chain; its full sequence is Activity-dependent neuroprotective protein 2a (962 aa).

Residues 75 to 98 (LCCSLCWYSSRSVPTFRSHIHRCH) form a C2H2-type 1 zinc finger. The C2H2-type 2; degenerate zinc finger occupies 108–130 (LMCPYCPFVSSPKVTEQHIQFFH). A C2H2-type 3; degenerate zinc finger spans residues 165 to 188 (YTCATCGYHDSLLYVMKKHVLVNH). The segment at 219-244 (YHCKLCKLPAETIEHLLYHILSSEKH) adopts a C2H2-type 4 zinc-finger fold. The segment at 527-547 (VKCLRCKILLTEQGIFQHLLH) adopts a C2H2-type 5; degenerate zinc-finger fold. 2 C2H2-type zinc fingers span residues 549–572 (LKCL…KKEH) and 650–673 (NACP…QTKH). The C2H2-type 8; degenerate zinc finger occupies 688 to 712 (YKCIYCFGVYTEKSTPKTISIHVQR). A disordered region spans residues 753 to 781 (QGAPEFPKPKKEAVTPRNRRRNTKASKTG). The segment at residues 795–854 (PMGMERTSFEDRKDFLSQYFHRKPYVTKTEIELLASRLWINKADVKAHFNSKLTKCLKAI) is a DNA-binding region (homeobox).

The protein localises to the nucleus. In terms of biological role, may be involved in transcriptional regulation. Required for progression through late erythroid differentiation. May be involved in vasculogenesis. This chain is Activity-dependent neuroprotective protein 2a, found in Danio rerio (Zebrafish).